The chain runs to 405 residues: Arginine biosynthesis bifunctional protein ArgJ (405 aa).

Threonine 152, lysine 178, threonine 189, glutamate 276, asparagine 400, and threonine 405 together coordinate substrate. The active-site Nucleophile is threonine 189.

It belongs to the ArgJ family. As to quaternary structure, heterotetramer of two alpha and two beta chains.

The protein resides in the cytoplasm. It carries out the reaction N(2)-acetyl-L-ornithine + L-glutamate = N-acetyl-L-glutamate + L-ornithine. It catalyses the reaction L-glutamate + acetyl-CoA = N-acetyl-L-glutamate + CoA + H(+). It participates in amino-acid biosynthesis; L-arginine biosynthesis; L-ornithine and N-acetyl-L-glutamate from L-glutamate and N(2)-acetyl-L-ornithine (cyclic): step 1/1. Its pathway is amino-acid biosynthesis; L-arginine biosynthesis; N(2)-acetyl-L-ornithine from L-glutamate: step 1/4. Its function is as follows. Catalyzes two activities which are involved in the cyclic version of arginine biosynthesis: the synthesis of N-acetylglutamate from glutamate and acetyl-CoA as the acetyl donor, and of ornithine by transacetylation between N(2)-acetylornithine and glutamate. The polypeptide is Arginine biosynthesis bifunctional protein ArgJ (Pseudomonas syringae pv. tomato (strain ATCC BAA-871 / DC3000)).